The sequence spans 400 residues: Probable peptidoglycan glycosyltransferase FtsW (400 aa).

Helical transmembrane passes span 30-50 (LSVL…SIGI), 65-84 (QAAY…RIRL), 92-112 (GLLL…GVGV), 123-143 (LGLF…LYLA), 157-177 (FAGF…LLME), 179-199 (DFGA…LAGA), 201-221 (LWQF…LAIT), 247-267 (TQSL…GASV), 280-300 (FLFA…VVLL), 321-341 (LFGA…AFIN), and 356-376 (LPLM…VGLL).

It belongs to the SEDS family. FtsW subfamily.

It localises to the cell inner membrane. The catalysed reaction is [GlcNAc-(1-&gt;4)-Mur2Ac(oyl-L-Ala-gamma-D-Glu-L-Lys-D-Ala-D-Ala)](n)-di-trans,octa-cis-undecaprenyl diphosphate + beta-D-GlcNAc-(1-&gt;4)-Mur2Ac(oyl-L-Ala-gamma-D-Glu-L-Lys-D-Ala-D-Ala)-di-trans,octa-cis-undecaprenyl diphosphate = [GlcNAc-(1-&gt;4)-Mur2Ac(oyl-L-Ala-gamma-D-Glu-L-Lys-D-Ala-D-Ala)](n+1)-di-trans,octa-cis-undecaprenyl diphosphate + di-trans,octa-cis-undecaprenyl diphosphate + H(+). The protein operates within cell wall biogenesis; peptidoglycan biosynthesis. Functionally, peptidoglycan polymerase that is essential for cell division. The chain is Probable peptidoglycan glycosyltransferase FtsW from Thioalkalivibrio sulfidiphilus (strain HL-EbGR7).